We begin with the raw amino-acid sequence, 203 residues long: MRGTLYIVAAPSGAGKSSIVNATLARDPKIALSISFTSRAPRPGERHAEHYHFVSADEFQGMIEAGDFFEYALVHGDWKGTARQSVEPQLAAGHDVLLEIDWQGARQVRQKVPDAVSVFILPPSRQALDERMRKRGQDSEVVMAQRLAAAREEMLHFEEFDYVIINETFDTAVSEMCAIFTASRLRRQAQQQRHAGLIRALLD.

One can recognise a Guanylate kinase-like domain in the interval 3–181 (GTLYIVAAPS…AVSEMCAIFT (179 aa)). Position 10-17 (10-17 (APSGAGKS)) interacts with ATP.

It belongs to the guanylate kinase family.

It is found in the cytoplasm. The enzyme catalyses GMP + ATP = GDP + ADP. In terms of biological role, essential for recycling GMP and indirectly, cGMP. The polypeptide is Guanylate kinase (Xanthomonas axonopodis pv. citri (strain 306)).